A 465-amino-acid chain; its full sequence is Sperm microtubule associated protein 2-like (465 aa).

Polar residues predominate over residues 1 to 29 (MENQEFLSSSAPSEVTDGQVSTEISTCSE). Residues 1–140 (MENQEFLSSS…REAKETELLP (140 aa)) form a disordered region. 2 stretches are compositionally biased toward basic and acidic residues: residues 40 to 70 (LDTH…QDQR) and 114 to 137 (KARE…KETE). THEG repeat units follow at residues 174-192 (RKCF…PKKQ), 214-233 (GALK…PKEV), 260-279 (PALF…PNGF), 297-316 (SLRI…AKGT), 333-352 (STLS…PRIK), 373-392 (AAMI…SKSV), 409-428 (ATTH…PNKR), and 446-465 (AALK…PLTR).

This is Sperm microtubule associated protein 2-like from Homo sapiens (Human).